Here is a 556-residue protein sequence, read N- to C-terminus: 2-succinyl-5-enolpyruvyl-6-hydroxy-3-cyclohexene-1-carboxylate synthase (556 aa).

Belongs to the TPP enzyme family. MenD subfamily. In terms of assembly, homodimer. Requires Mg(2+) as cofactor. Mn(2+) is required as a cofactor. The cofactor is thiamine diphosphate.

It catalyses the reaction isochorismate + 2-oxoglutarate + H(+) = 5-enolpyruvoyl-6-hydroxy-2-succinyl-cyclohex-3-ene-1-carboxylate + CO2. Its pathway is quinol/quinone metabolism; 1,4-dihydroxy-2-naphthoate biosynthesis; 1,4-dihydroxy-2-naphthoate from chorismate: step 2/7. It participates in quinol/quinone metabolism; menaquinone biosynthesis. Its function is as follows. Catalyzes the thiamine diphosphate-dependent decarboxylation of 2-oxoglutarate and the subsequent addition of the resulting succinic semialdehyde-thiamine pyrophosphate anion to isochorismate to yield 2-succinyl-5-enolpyruvyl-6-hydroxy-3-cyclohexene-1-carboxylate (SEPHCHC). The polypeptide is 2-succinyl-5-enolpyruvyl-6-hydroxy-3-cyclohexene-1-carboxylate synthase (Escherichia coli (strain ATCC 8739 / DSM 1576 / NBRC 3972 / NCIMB 8545 / WDCM 00012 / Crooks)).